Here is an 83-residue protein sequence, read N- to C-terminus: MGNMGIWQLLIIAVIVILLFGTKKLRSLGGDLGGAVKGFKNAMSSEEEKKALEETASEKATPSVEKTAPNAEKKTETKDKEQV.

Residues 1-21 form a helical membrane-spanning segment; that stretch reads MGNMGIWQLLIIAVIVILLFG. Composition is skewed to basic and acidic residues over residues 47–57 and 71–83; these read EEKKALEETAS and AEKKTETKDKEQV. The tract at residues 47 to 83 is disordered; it reads EEKKALEETASEKATPSVEKTAPNAEKKTETKDKEQV.

Belongs to the TatA/E family. As to quaternary structure, the Tat system comprises two distinct complexes: a TatABC complex, containing multiple copies of TatA, TatB and TatC subunits, and a separate TatA complex, containing only TatA subunits. Substrates initially bind to the TatABC complex, which probably triggers association of the separate TatA complex to form the active translocon.

It localises to the cell inner membrane. In terms of biological role, part of the twin-arginine translocation (Tat) system that transports large folded proteins containing a characteristic twin-arginine motif in their signal peptide across membranes. TatA could form the protein-conducting channel of the Tat system. The chain is Sec-independent protein translocase protein TatA from Shewanella woodyi (strain ATCC 51908 / MS32).